The primary structure comprises 134 residues: ATP synthase epsilon chain (134 aa).

It belongs to the ATPase epsilon chain family. In terms of assembly, F-type ATPases have 2 components, CF(1) - the catalytic core - and CF(0) - the membrane proton channel. CF(1) has five subunits: alpha(3), beta(3), gamma(1), delta(1), epsilon(1). CF(0) has three main subunits: a, b and c. In this bacterium the a and b subunits are transcribed but do not seem to be translated, thus the ATP synthase consists of the alpha, beta, gamma, delta, epsilon and c subunits.

It localises to the cell membrane. In terms of biological role, produces ATP from ADP in the presence of a proton gradient across the membrane. The protein is ATP synthase epsilon chain of Moorella thermoacetica (strain ATCC 39073 / JCM 9320).